An 802-amino-acid chain; its full sequence is Lon protease (802 aa).

Residues 17–209 (LPILPLNNVV…QVLSFLERER (193 aa)) form the Lon N-terminal domain. 363–370 (GPPGVGKT) is a binding site for ATP. The Lon proteolytic domain maps to 599-780 (EDEVGVVTGL…DEVLPRVLHP (182 aa)). Residues Ser686 and Lys729 contribute to the active site.

The protein belongs to the peptidase S16 family. As to quaternary structure, homohexamer. Organized in a ring with a central cavity.

Its subcellular location is the cytoplasm. The catalysed reaction is Hydrolysis of proteins in presence of ATP.. In terms of biological role, ATP-dependent serine protease that mediates the selective degradation of mutant and abnormal proteins as well as certain short-lived regulatory proteins. Required for cellular homeostasis and for survival from DNA damage and developmental changes induced by stress. Degrades polypeptides processively to yield small peptide fragments that are 5 to 10 amino acids long. Binds to DNA in a double-stranded, site-specific manner. This chain is Lon protease, found in Roseiflexus castenholzii (strain DSM 13941 / HLO8).